The primary structure comprises 292 residues: 4-hydroxy-tetrahydrodipicolinate synthase (292 aa).

Thr45 is a binding site for pyruvate. Tyr133 (proton donor/acceptor) is an active-site residue. Lys161 functions as the Schiff-base intermediate with substrate in the catalytic mechanism. Pyruvate is bound at residue Ile203.

This sequence belongs to the DapA family. Homodimer.

It localises to the cytoplasm. It carries out the reaction L-aspartate 4-semialdehyde + pyruvate = (2S,4S)-4-hydroxy-2,3,4,5-tetrahydrodipicolinate + H2O + H(+). Its pathway is amino-acid biosynthesis; L-lysine biosynthesis via DAP pathway; (S)-tetrahydrodipicolinate from L-aspartate: step 3/4. In terms of biological role, catalyzes the condensation of (S)-aspartate-beta-semialdehyde [(S)-ASA] and pyruvate to 4-hydroxy-tetrahydrodipicolinate (HTPA). In Pseudomonas putida (strain W619), this protein is 4-hydroxy-tetrahydrodipicolinate synthase.